A 258-amino-acid polypeptide reads, in one-letter code: Tryptophan synthase alpha chain (258 aa).

Active-site proton acceptor residues include Glu52 and Asp63.

The protein belongs to the TrpA family. In terms of assembly, tetramer of two alpha and two beta chains.

The enzyme catalyses (1S,2R)-1-C-(indol-3-yl)glycerol 3-phosphate + L-serine = D-glyceraldehyde 3-phosphate + L-tryptophan + H2O. It participates in amino-acid biosynthesis; L-tryptophan biosynthesis; L-tryptophan from chorismate: step 5/5. Its function is as follows. The alpha subunit is responsible for the aldol cleavage of indoleglycerol phosphate to indole and glyceraldehyde 3-phosphate. The sequence is that of Tryptophan synthase alpha chain from Streptococcus pneumoniae serotype 2 (strain D39 / NCTC 7466).